A 110-amino-acid polypeptide reads, in one-letter code: uncharacterized protein (110 aa).

The tract at residues 38–62 is disordered; it reads SVQQNARAEEAEAAAPPAEEDSLPD.

This is an uncharacterized protein from Mus musculus (Mouse).